Consider the following 252-residue polypeptide: Methylthioribulose-1-phosphate dehydratase (252 aa).

Position 105 (Cys105) interacts with substrate. Zn(2+) is bound by residues His123 and His125. Glu151 acts as the Proton donor/acceptor in catalysis. His208 serves as a coordination point for Zn(2+).

It belongs to the aldolase class II family. MtnB subfamily. The cofactor is Zn(2+).

It localises to the cytoplasm. The catalysed reaction is 5-(methylsulfanyl)-D-ribulose 1-phosphate = 5-methylsulfanyl-2,3-dioxopentyl phosphate + H2O. It functions in the pathway amino-acid biosynthesis; L-methionine biosynthesis via salvage pathway; L-methionine from S-methyl-5-thio-alpha-D-ribose 1-phosphate: step 2/6. In terms of biological role, catalyzes the dehydration of methylthioribulose-1-phosphate (MTRu-1-P) into 2,3-diketo-5-methylthiopentyl-1-phosphate (DK-MTP-1-P). In Sclerotinia sclerotiorum (strain ATCC 18683 / 1980 / Ss-1) (White mold), this protein is Methylthioribulose-1-phosphate dehydratase.